We begin with the raw amino-acid sequence, 665 residues long: Translation factor GUF1 homolog, mitochondrial (665 aa).

A mitochondrion-targeting transit peptide spans 1-35; it reads MAGAAVLRRSARRIYRHLAAAPAFSRSVLQQPKRL. Positions 34-53 are disordered; it reads RLLSSQSSPEHGARGAVSGS. The tr-type G domain occupies 61–249; the sequence is ERVRNFSIIA…AVIERIPSPP (189 aa). GTP is bound by residues 70–77, 142–146, and 196–199; these read AHVDHGKS, DTPGH, and NKID.

This sequence belongs to the TRAFAC class translation factor GTPase superfamily. Classic translation factor GTPase family. LepA subfamily.

It is found in the mitochondrion inner membrane. The enzyme catalyses GTP + H2O = GDP + phosphate + H(+). Its function is as follows. Promotes mitochondrial protein synthesis. May act as a fidelity factor of the translation reaction, by catalyzing a one-codon backward translocation of tRNAs on improperly translocated ribosomes. Binds to mitochondrial ribosomes in a GTP-dependent manner. This chain is Translation factor GUF1 homolog, mitochondrial, found in Sorghum bicolor (Sorghum).